Reading from the N-terminus, the 438-residue chain is Serine hydroxymethyltransferase (438 aa).

Residues L133 and 137-139 each bind (6S)-5,6,7,8-tetrahydrofolate; that span reads GHL. At K242 the chain carries N6-(pyridoxal phosphate)lysine.

Belongs to the SHMT family. As to quaternary structure, homodimer. Pyridoxal 5'-phosphate serves as cofactor.

The protein resides in the cytoplasm. The catalysed reaction is (6R)-5,10-methylene-5,6,7,8-tetrahydrofolate + glycine + H2O = (6S)-5,6,7,8-tetrahydrofolate + L-serine. Its pathway is one-carbon metabolism; tetrahydrofolate interconversion. The protein operates within amino-acid biosynthesis; glycine biosynthesis; glycine from L-serine: step 1/1. Its function is as follows. Catalyzes the reversible interconversion of serine and glycine with tetrahydrofolate (THF) serving as the one-carbon carrier. This reaction serves as the major source of one-carbon groups required for the biosynthesis of purines, thymidylate, methionine, and other important biomolecules. Also exhibits THF-independent aldolase activity toward beta-hydroxyamino acids, producing glycine and aldehydes, via a retro-aldol mechanism. This Brucella canis (strain ATCC 23365 / NCTC 10854 / RM-666) protein is Serine hydroxymethyltransferase.